The chain runs to 130 residues: Ribosome biogenesis inhibitor MINAS-60 (130 aa).

Residues 61 to 130 (SRVRRIPTRP…RRRRPVTSSC (70 aa)) are disordered. The span at 109 to 130 (KGRRRRRRRMRRRRRRPVTSSC) shows a compositional bias: basic residues.

As to quaternary structure, interacts with 60S ribosome assembly factors GTPBP4 and MRTO4.

It localises to the nucleus. The protein localises to the nucleolus. Its function is as follows. Acts as a late-stage inhibitor of pre-60S ribosome assembly by preventing pre-60S ribosome export from nucleus. The chain is Ribosome biogenesis inhibitor MINAS-60 from Homo sapiens (Human).